The primary structure comprises 124 residues: S-adenosylmethionine decarboxylase proenzyme (124 aa).

The Schiff-base intermediate with substrate; via pyruvic acid role is filled by Ser-70. Position 70 is a pyruvic acid (Ser); by autocatalysis (Ser-70). The active-site Proton acceptor; for processing activity is His-75. The active-site Proton donor; for catalytic activity is the Cys-90.

This sequence belongs to the prokaryotic AdoMetDC family. Type 1 subfamily. In terms of assembly, heterotetramer of two alpha and two beta chains arranged as a dimer of alpha/beta heterodimers. Requires pyruvate as cofactor. In terms of processing, is synthesized initially as an inactive proenzyme. Formation of the active enzyme involves a self-maturation process in which the active site pyruvoyl group is generated from an internal serine residue via an autocatalytic post-translational modification. Two non-identical subunits are generated from the proenzyme in this reaction, and the pyruvate is formed at the N-terminus of the alpha chain, which is derived from the carboxyl end of the proenzyme. The post-translation cleavage follows an unusual pathway, termed non-hydrolytic serinolysis, in which the side chain hydroxyl group of the serine supplies its oxygen atom to form the C-terminus of the beta chain, while the remainder of the serine residue undergoes an oxidative deamination to produce ammonia and the pyruvoyl group blocking the N-terminus of the alpha chain.

It catalyses the reaction S-adenosyl-L-methionine + H(+) = S-adenosyl 3-(methylsulfanyl)propylamine + CO2. It functions in the pathway amine and polyamine biosynthesis; S-adenosylmethioninamine biosynthesis; S-adenosylmethioninamine from S-adenosyl-L-methionine: step 1/1. In terms of biological role, catalyzes the decarboxylation of S-adenosylmethionine to S-adenosylmethioninamine (dcAdoMet), the propylamine donor required for the synthesis of the polyamines spermine and spermidine from the diamine putrescine. This is S-adenosylmethionine decarboxylase proenzyme from Pyrobaculum neutrophilum (strain DSM 2338 / JCM 9278 / NBRC 100436 / V24Sta) (Thermoproteus neutrophilus).